The primary structure comprises 152 residues: Large ribosomal subunit protein bL9 (152 aa).

The protein belongs to the bacterial ribosomal protein bL9 family.

Functionally, binds to the 23S rRNA. In Streptococcus thermophilus (strain CNRZ 1066), this protein is Large ribosomal subunit protein bL9.